The chain runs to 674 residues: Kelch repeat and BTB domain-containing protein 6 (674 aa).

A disordered region spans residues 1–28; sequence MQSREDAPRSRRLASPRGGKRPKKIHKP. Residues 10-27 are compositionally biased toward basic residues; the sequence is SRRLASPRGGKRPKKIHK. The 76-residue stretch at 63-138 folds into the BTB domain; it reads CDVTIEVVTP…CYTGRVSLSE (76 aa). 6 Kelch repeats span residues 386–435, 436–484, 486–523, 524–564, 567–616, and 642–673; these read AVCI…YLNG, YIYI…VIRD, LYALNSKRMFCYDPSHNMWLKCVSLKRNDFQEACVFNE, EIYC…IIKH, KLLL…CLSA, and TEWDLGGFSEPDSESGSSSSLSDDDFWVRVAP. A disordered region spans residues 631 to 674; sequence TEEEEIPSESSTEWDLGGFSEPDSESGSSSSLSDDDFWVRVAPQ. Positions 668–671 match the ATG8 interaction motif (AIM) motif; that stretch reads WVRV.

Core component of a BCR3 (BTB-CUL3-RBX1) E3 ubiquitin ligase complex, also named Cul3-RING ubiquitin ligase complex CUL3(KBTBD6/7), composed of CUL3, RBX1, KBTBD6 and KBTBD7. Interacts with GABARAP; the interaction is direct and is required for the ubiquitination of TIAM1. Interacts with GABARAPL1, GABARAPL2 and MAP1LC3B; the interaction is direct.

It is found in the cytoplasm. Its subcellular location is the nucleus. The protein operates within protein modification; protein ubiquitination. Its function is as follows. As part of the CUL3(KBTBD6/7) E3 ubiquitin ligase complex functions as a substrate adapter for the RAC1 guanine exchange factor (GEF) TIAM1, mediating its 'Lys-48' ubiquitination and proteasomal degradation. By controlling this ubiquitination, regulates RAC1 signal transduction and downstream biological processes including the organization of the cytoskeleton, cell migration and cell proliferation. Ubiquitination of TIAM1 requires the membrane-associated protein GABARAP which may restrict locally the activity of the complex. This is Kelch repeat and BTB domain-containing protein 6 from Homo sapiens (Human).